Consider the following 113-residue polypeptide: uncharacterized protein (113 aa).

This is an uncharacterized protein from Escherichia coli (strain K12).